Reading from the N-terminus, the 226-residue chain is PKHD-type hydroxylase mma_3618 (226 aa).

The 101-residue stretch at 78–178 (RYMPPLFNRY…RISSFFWVQS (101 aa)) folds into the Fe2OG dioxygenase domain. The Fe cation site is built by His96, Asp98, and His159. Residue Arg169 coordinates 2-oxoglutarate.

Fe(2+) is required as a cofactor. It depends on L-ascorbate as a cofactor.

This chain is PKHD-type hydroxylase mma_3618, found in Janthinobacterium sp. (strain Marseille) (Minibacterium massiliensis).